The sequence spans 306 residues: Putative type I specificity subunit S.MpnORF285P (306 aa).

The protein belongs to the type-I restriction system S methylase family. In terms of assembly, the methyltransferase is composed of M and S polypeptides.

The specificity (S) subunit of a type I methyltransferase (MTase); this subunit dictates DNA sequence specificity. The single R subunit has multiple frameshifts and is probably not expressed. This chain is Putative type I specificity subunit S.MpnORF285P, found in Mycoplasma pneumoniae (strain ATCC 29342 / M129 / Subtype 1) (Mycoplasmoides pneumoniae).